The following is a 252-amino-acid chain: Cell division protein ZapD (252 aa).

This sequence belongs to the ZapD family. Interacts with FtsZ.

The protein resides in the cytoplasm. In terms of biological role, cell division factor that enhances FtsZ-ring assembly. Directly interacts with FtsZ and promotes bundling of FtsZ protofilaments, with a reduction in FtsZ GTPase activity. In Cupriavidus necator (strain ATCC 17699 / DSM 428 / KCTC 22496 / NCIMB 10442 / H16 / Stanier 337) (Ralstonia eutropha), this protein is Cell division protein ZapD.